We begin with the raw amino-acid sequence, 322 residues long: Phospho-N-acetylmuramoyl-pentapeptide-transferase (322 aa).

Helical transmembrane passes span Y10–L30, N51–T71, M79–I99, L107–F127, F146–V166, L178–A198, V203–Y223, V227–L247, S250–I270, and V302–F322.

It belongs to the glycosyltransferase 4 family. MraY subfamily. Requires Mg(2+) as cofactor.

It is found in the cell membrane. The enzyme catalyses UDP-N-acetyl-alpha-D-muramoyl-L-alanyl-gamma-D-glutamyl-meso-2,6-diaminopimeloyl-D-alanyl-D-alanine + di-trans,octa-cis-undecaprenyl phosphate = di-trans,octa-cis-undecaprenyl diphospho-N-acetyl-alpha-D-muramoyl-L-alanyl-D-glutamyl-meso-2,6-diaminopimeloyl-D-alanyl-D-alanine + UMP. The protein operates within cell wall biogenesis; peptidoglycan biosynthesis. In terms of biological role, catalyzes the initial step of the lipid cycle reactions in the biosynthesis of the cell wall peptidoglycan: transfers peptidoglycan precursor phospho-MurNAc-pentapeptide from UDP-MurNAc-pentapeptide onto the lipid carrier undecaprenyl phosphate, yielding undecaprenyl-pyrophosphoryl-MurNAc-pentapeptide, known as lipid I. The chain is Phospho-N-acetylmuramoyl-pentapeptide-transferase from Clostridioides difficile (strain 630) (Peptoclostridium difficile).